The sequence spans 76 residues: Nemertide alpha-1 (76 aa).

Positions 1-28 (YRIASSSIAKMKTAVFLVGLLFLGLVFA) are cleaved as a signal peptide. A propeptide spanning residues 29–44 (DEAAIDSEFDQSIDKR) is cleaved from the precursor. 3 cysteine pairs are disulfide-bonded: Cys-46-Cys-60, Cys-53-Cys-64, and Cys-59-Cys-70. Residues Pro-72 and Pro-73 each carry the 4-hydroxyproline modification.

This sequence belongs to the nemertide family. As to expression, confined to the epidermis and to the mucus layer.

It is found in the secreted. Functionally, highly potent toxin against insect sodium channel (Nav) and with less potent activity against mammalian sodium channels. Potently inhibits inactivation of insect sodium channels of B.germanica (BgNav1) (EC(50)=8.6 nM), D.melanogaster (Dm Nav1), and arachnid sodium channel V.destructor (VdNav1). Also delays the inactivation of most mammalian Nav channels tested (human Nav1.1/SCN1A; EC(50)=124.1 nM, rat Nav1.2/SCN2A; EC(50)=359.6 nM, rat Nav1.3/SCN3A; EC(50)=135.4 nM, rat Nav1.4/SCN4A; EC(50)=145.5 nM, human Nav1.5/SCN5A; EC(50)=138.3 nM, mouse Nav1.6/SCN8A; EC(50)=240.4 nM, human Nav1.9/SCN9A; EC(50)=76.5 nM). 1 uM is enough to completely inhibits the inactivation, resulting in sustained non-inactivating currents. In addition, the toxin significantly enhances the recovery from inactivation, and the open state is not required for the toxin to interact with the channel. In vivo, injection into green crabs (Carcinus maenas at 1 mug/kg) of small doses (1-5 ug/kg) results in slow and fast permanent paralysis, whereas injection of high doses (more than 10 ug/kg) causes death. Injection into juvenile Blaptica dubia cockroaches results in death or permanent paralysis at doses higher than 7.1 ug/kg. Injection into brine shrimp (Artemia salina) stops movement or causes death after 24 hours (EC(50)=0.3 uM). In the rare inherited cardiac arrhythmia Brugada syndrome 1 (BRGDA1), this toxin is able to restore the loss of function by reducing channel inactivation, without affecting activation, by binding to Nav1.5/SCN5A. In Lineus lacteus (Ribbon worm), this protein is Nemertide alpha-1.